Consider the following 629-residue polypeptide: tRNA uridine 5-carboxymethylaminomethyl modification enzyme MnmG (629 aa).

Residues 13–18 (GGGHAG), Val125, and Ser180 contribute to the FAD site. An NAD(+)-binding site is contributed by 273–287 (GPRYCPSIEDKVMRF). Gln370 is a binding site for FAD.

Belongs to the MnmG family. Homodimer. Heterotetramer of two MnmE and two MnmG subunits. FAD is required as a cofactor.

Its subcellular location is the cytoplasm. Its function is as follows. NAD-binding protein involved in the addition of a carboxymethylaminomethyl (cmnm) group at the wobble position (U34) of certain tRNAs, forming tRNA-cmnm(5)s(2)U34. The polypeptide is tRNA uridine 5-carboxymethylaminomethyl modification enzyme MnmG (Photobacterium profundum (strain SS9)).